The chain runs to 184 residues: GGDGSLTGANRFKGEWSSLVKELLETGKITKEVAEKHSHLNIVGMVGSIDNDFCGTDMTIGTDSALHRIVEVADNIIPTAYSHQRAFVLEVMGRHCGYLALVAGIVTEADFVFAPEWPPEEDWPEKLCKKLELERQSGQRLNIIIVAEGAIDRQGNPITAEGVKKIIVDRLEMDTRTTVLGHIQ.

The segment at 1 to 184 is N-terminal catalytic PFK domain 1; the sequence is GGDGSLTGAN…TRTTVLGHIQ (184 aa). 2–5 provides a ligand contact to ATP; that stretch reads GDGS. Aspartate 3 contributes to the Mg(2+) binding site. Substrate contacts are provided by residues 48–50, arginine 85, 92–94, glutamate 148, arginine 176, and 182–184; these read SID, MGR, and HIQ. Catalysis depends on aspartate 50, which acts as the Proton acceptor.

This sequence belongs to the phosphofructokinase type A (PFKA) family. ATP-dependent PFK group I subfamily. Eukaryotic two domain clade 'E' sub-subfamily. As to quaternary structure, homotetramer. Requires Mg(2+) as cofactor.

It localises to the cytoplasm. The enzyme catalyses beta-D-fructose 6-phosphate + ATP = beta-D-fructose 1,6-bisphosphate + ADP + H(+). It participates in carbohydrate degradation; glycolysis; D-glyceraldehyde 3-phosphate and glycerone phosphate from D-glucose: step 3/4. Allosterically activated by ADP, AMP, or fructose 2,6-bisphosphate, and allosterically inhibited by ATP or citrate. Functionally, catalyzes the phosphorylation of D-fructose 6-phosphate to fructose 1,6-bisphosphate by ATP, the first committing step of glycolysis. The protein is ATP-dependent 6-phosphofructokinase (PFK) of Calanus finmarchicus (Calanus tonsus).